The chain runs to 344 residues: tRNA N6-adenosine threonylcarbamoyltransferase (344 aa).

Fe cation contacts are provided by histidine 111 and histidine 115. Substrate contacts are provided by residues 134–138, aspartate 167, glycine 180, and asparagine 273; that span reads LVSGG. Aspartate 301 serves as a coordination point for Fe cation.

This sequence belongs to the KAE1 / TsaD family. Requires Fe(2+) as cofactor.

Its subcellular location is the cytoplasm. The enzyme catalyses L-threonylcarbamoyladenylate + adenosine(37) in tRNA = N(6)-L-threonylcarbamoyladenosine(37) in tRNA + AMP + H(+). Its function is as follows. Required for the formation of a threonylcarbamoyl group on adenosine at position 37 (t(6)A37) in tRNAs that read codons beginning with adenine. Is involved in the transfer of the threonylcarbamoyl moiety of threonylcarbamoyl-AMP (TC-AMP) to the N6 group of A37, together with TsaE and TsaB. TsaD likely plays a direct catalytic role in this reaction. This chain is tRNA N6-adenosine threonylcarbamoyltransferase, found in Cupriavidus pinatubonensis (strain JMP 134 / LMG 1197) (Cupriavidus necator (strain JMP 134)).